Reading from the N-terminus, the 578-residue chain is MQFCFRILILYISLSIDNNYLVTTLISLKENVFLHIFTLTFLFKAFLLKMAKRSVEELKRSADEEASVKRKEKKSKHEHKKHKKDKPSADKDRISKKDKKKSKKGKSKTKEESIEINAEEGAKIAQPAIGSANASNHNDEEAYDRYIKKHNISFADPKSSENLLPILQFDELDVSAKLREGLKNYKEPTPIQAATWPYLLAGRDVVGIAETGSGKTVAFGIPALQYLNGLSDNKSVPRVLVVSPTRELAIQTYENLNSLIQGTNLKAVVVYGGAPKSEQARAAKNASVIIGTPGRLLDLINDGSIDCSQVGYLVLDEADRMLDTGFEQDIRNIISHTPDPTRNGSRQTVFFSATWPESVRALAATFLKDPVKITIGSDELAASQNITQIVEILDDPRSKERMLDNLLRKHLSSGGKDDKILIFVLYKKEAARVEGTLARKYNVVGIHGDMSQGARLQALNDFKSGKCPVLVATDVAARGLDIPKVQLVINVTFPLTIEDYVHRIGRTGRANTKGTAITFFTPQDKSHAGELVNVLRQAKQDIPEGLFKFGTAVKPKLNAYGSRVVDVPVKAATKIVFD.

The span at 59 to 69 (KRSADEEASVK) shows a compositional bias: basic and acidic residues. The segment at 59–117 (KRSADEEASVKRKEKKSKHEHKKHKKDKPSADKDRISKKDKKKSKKGKSKTKEESIEIN) is disordered. Residues 70 to 85 (RKEKKSKHEHKKHKKD) show a composition bias toward basic residues. Basic and acidic residues predominate over residues 86–95 (KPSADKDRIS). A compositionally biased stretch (basic residues) spans 96-107 (KKDKKKSKKGKS). The short motif at 167-193 (LQFDELDVSAKLREGLKNYKEPTPIQA) is the Q motif element. The Helicase ATP-binding domain occupies 196 to 373 (WPYLLAGRDV…ATFLKDPVKI (178 aa)). 209–216 (AETGSGKT) is an ATP binding site. The short motif at 316-319 (DEAD) is the DEAD box element. The Helicase C-terminal domain occupies 402-550 (MLDNLLRKHL…DIPEGLFKFG (149 aa)).

It belongs to the DEAD box helicase family. DDX5/DBP2 subfamily.

The protein localises to the nucleus. It localises to the nucleolus. It carries out the reaction ATP + H2O = ADP + phosphate + H(+). ATP-dependent RNA helicase required for 60S ribosomal subunit synthesis. Involved in efficient pre-rRNA processing, predominantly at site A3, which is necessary for the normal formation of 25S and 5.8S rRNAs. The protein is ATP-dependent RNA helicase dbp3 (dbp3) of Schizosaccharomyces pombe (strain 972 / ATCC 24843) (Fission yeast).